We begin with the raw amino-acid sequence, 210 residues long: Superoxide dismutase [Mn], mitochondrial (210 aa).

Mn(2+)-binding residues include His-29, His-77, Asp-164, and His-168.

Belongs to the iron/manganese superoxide dismutase family. Homotetramer. Mn(2+) is required as a cofactor.

Its subcellular location is the mitochondrion matrix. It carries out the reaction 2 superoxide + 2 H(+) = H2O2 + O2. Its function is as follows. Destroys superoxide anion radicals which are normally produced within the cells and which are toxic to biological systems. In Aspergillus oryzae (strain ATCC 42149 / RIB 40) (Yellow koji mold), this protein is Superoxide dismutase [Mn], mitochondrial (sodB).